The primary structure comprises 142 residues: Hemoglobin subunit alpha-A (142 aa).

The 141-residue stretch at 2-142 (VLSAADKTNV…VGAVLTAKYR (141 aa)) folds into the Globin domain. H59 is a binding site for O2. Residue H88 participates in heme b binding.

This sequence belongs to the globin family. Heterotetramer of two alpha chains and two beta chains. In terms of tissue distribution, red blood cells.

Functionally, involved in oxygen transport from the lung to the various peripheral tissues. In Anas platyrhynchos (Mallard), this protein is Hemoglobin subunit alpha-A (HBAA).